A 384-amino-acid chain; its full sequence is tRNA-specific 2-thiouridylase MnmA (384 aa).

ATP-binding positions include 21 to 28 (GMSGGVDS) and Met47. An interaction with target base in tRNA region spans residues 107 to 109 (NPD). Cys112 serves as the catalytic Nucleophile. An intrachain disulfide couples Cys112 to Cys208. Residue Gly136 participates in ATP binding. Positions 158 to 160 (KDQ) are interaction with tRNA. Cys208 acts as the Cysteine persulfide intermediate in catalysis. The segment at 320–321 (RY) is interaction with tRNA.

It belongs to the MnmA/TRMU family.

It is found in the cytoplasm. The catalysed reaction is S-sulfanyl-L-cysteinyl-[protein] + uridine(34) in tRNA + AH2 + ATP = 2-thiouridine(34) in tRNA + L-cysteinyl-[protein] + A + AMP + diphosphate + H(+). In terms of biological role, catalyzes the 2-thiolation of uridine at the wobble position (U34) of tRNA, leading to the formation of s(2)U34. The chain is tRNA-specific 2-thiouridylase MnmA from Chromohalobacter salexigens (strain ATCC BAA-138 / DSM 3043 / CIP 106854 / NCIMB 13768 / 1H11).